The following is a 129-amino-acid chain: Fluoride-specific ion channel FluC (129 aa).

4 consecutive transmembrane segments (helical) span residues 10 to 30 (LLVG…ALAF), 35 to 55 (PGFP…IGFL), 71 to 91 (LFLV…MFEG), and 105 to 125 (LYLA…IIAA). Residues glycine 79 and threonine 82 each contribute to the Na(+) site.

It belongs to the fluoride channel Fluc/FEX (TC 1.A.43) family.

The protein resides in the cell inner membrane. The enzyme catalyses fluoride(in) = fluoride(out). With respect to regulation, na(+) is not transported, but it plays an essential structural role and its presence is essential for fluoride channel function. Fluoride-specific ion channel. Important for reducing fluoride concentration in the cell, thus reducing its toxicity. This chain is Fluoride-specific ion channel FluC, found in Chlorobium luteolum (strain DSM 273 / BCRC 81028 / 2530) (Pelodictyon luteolum).